The following is a 752-amino-acid chain: Double zinc ribbon and ankyrin repeat-containing protein 1 (752 aa).

DZANK-type zinc fingers lie at residues 210 to 270 and 338 to 386; these read CPKC…VVCE and CSKC…GGCG. Over residues 448-469 the composition is skewed to basic and acidic residues; sequence KKRSQQREAELSRQEQMRDRKP. Disordered regions lie at residues 448 to 471 and 536 to 614; these read KKRS…KPLL and PPEE…VGPE. The segment covering 536 to 554 has biased composition (low complexity); the sequence is PPEESRSSSAGQRSRSVTS. A compositionally biased stretch (polar residues) spans 555–580; the sequence is ESQNLSSVTEGRNSASPENNINTTGS. Residues 600–614 are compositionally biased toward basic and acidic residues; it reads PESKDSLLLKEVGPE. ANK repeat units lie at residues 638 to 667, 672 to 703, and 707 to 737; these read DGRP…DVNQ, LKNT…SIRK, and RGQT…GLLL.

Its subcellular location is the cytoplasm. It is found in the cytoskeleton. The protein resides in the microtubule organizing center. It localises to the centrosome. The protein localises to the cilium basal body. Its function is as follows. Required for the intracellular transport of organelles and vesicles, and is essential for the photoreceptor's outer segments formation, maintenance and function. This Danio rerio (Zebrafish) protein is Double zinc ribbon and ankyrin repeat-containing protein 1 (dzank1).